We begin with the raw amino-acid sequence, 224 residues long: Charged multivesicular body protein 4c (224 aa).

Disordered stretches follow at residues 1 to 21 and 182 to 224; these read MSVF…PTPQ and SGPE…AWAM. Positions 7-17 are enriched in gly residues; the sequence is LFGGGGKGGKG. The stretch at 21–221 forms a coiled coil; sequence QEAIQKLRET…DEDDMEELKA (201 aa).

It belongs to the SNF7 family. Probable core component of the endosomal sorting required for transport complex III (ESCRT-III). ESCRT-III components are thought to multimerize to form a flat lattice on the perimeter membrane of the endosome.

The protein localises to the cytoplasm. It is found in the cytosol. The protein resides in the late endosome membrane. Probable core component of the endosomal sorting required for transport complex III (ESCRT-III) which is involved in multivesicular bodies (MVBs) formation and sorting of endosomal cargo proteins into MVBs. MVBs contain intraluminal vesicles (ILVs) that are generated by invagination and scission from the limiting membrane of the endosome and mostly are delivered to lysosomes enabling degradation of membrane proteins, such as stimulated growth factor receptors, lysosomal enzymes and lipids. Key component of the cytokinesis checkpoint, a process required to delay abscission to prevent both premature resolution of intercellular chromosome bridges and accumulation of DNA damage. The polypeptide is Charged multivesicular body protein 4c (chmp4c) (Danio rerio (Zebrafish)).